Reading from the N-terminus, the 280-residue chain is Alpha-methyl-mannoside-specific lectin (280 aa).

An N-terminal signal peptide occupies residues 1–26; sequence MAISKKILPLLSIATIFLLLLNKAHS. A carbohydrate contacts are provided by Asp114 and Gly134. Positions 156 and 158 each coordinate Mn(2+). The Ca(2+) site is built by Asp158 and Phe160. A carbohydrate-binding residues include Ser165 and Asn166. Residues Asn166 and Asp169 each coordinate Ca(2+). Asp169 and His174 together coordinate Mn(2+). The a carbohydrate site is built by Gly248 and Gln250.

Belongs to the leguminous lectin family. Homodimer. Glycosylated.

Its function is as follows. Alpha-methyl-D-mannoside-specific lectin. Has hemagglutinating activity towards rabbit erythrocytes. Binds to cytokinins and significantly inhibits physiological effects of cytokinin activity such as cotyledon expansion and delayed leaf senescence. The sequence is that of Alpha-methyl-mannoside-specific lectin from Arachis hypogaea (Peanut).